The following is a 324-amino-acid chain: tRNA pseudouridine synthase B (324 aa).

Asp49 (nucleophile) is an active-site residue.

The protein belongs to the pseudouridine synthase TruB family. Type 1 subfamily.

The enzyme catalyses uridine(55) in tRNA = pseudouridine(55) in tRNA. In terms of biological role, responsible for synthesis of pseudouridine from uracil-55 in the psi GC loop of transfer RNAs. The sequence is that of tRNA pseudouridine synthase B from Tolumonas auensis (strain DSM 9187 / NBRC 110442 / TA 4).